The chain runs to 183 residues: Peptidyl-tRNA hydrolase (183 aa).

Tyr15 lines the tRNA pocket. Catalysis depends on His20, which acts as the Proton acceptor. Positions 67 and 69 each coordinate tRNA.

This sequence belongs to the PTH family. In terms of assembly, monomer.

It is found in the cytoplasm. It catalyses the reaction an N-acyl-L-alpha-aminoacyl-tRNA + H2O = an N-acyl-L-amino acid + a tRNA + H(+). Hydrolyzes ribosome-free peptidyl-tRNAs (with 1 or more amino acids incorporated), which drop off the ribosome during protein synthesis, or as a result of ribosome stalling. In terms of biological role, catalyzes the release of premature peptidyl moieties from peptidyl-tRNA molecules trapped in stalled 50S ribosomal subunits, and thus maintains levels of free tRNAs and 50S ribosomes. This chain is Peptidyl-tRNA hydrolase, found in Chlamydia caviae (strain ATCC VR-813 / DSM 19441 / 03DC25 / GPIC) (Chlamydophila caviae).